The sequence spans 208 residues: Large ribosomal subunit protein uL4 (208 aa).

The disordered stretch occupies residues 46–84 (QGTHKAKTRAEVRGGGRKPFRQKGTGNARQGSTRSPLMI). A compositionally biased stretch (polar residues) spans 69–80 (GTGNARQGSTRS).

The protein belongs to the universal ribosomal protein uL4 family. As to quaternary structure, part of the 50S ribosomal subunit.

Its function is as follows. One of the primary rRNA binding proteins, this protein initially binds near the 5'-end of the 23S rRNA. It is important during the early stages of 50S assembly. It makes multiple contacts with different domains of the 23S rRNA in the assembled 50S subunit and ribosome. Functionally, forms part of the polypeptide exit tunnel. This is Large ribosomal subunit protein uL4 from Chlorobium limicola (strain DSM 245 / NBRC 103803 / 6330).